The primary structure comprises 472 residues: Na(+)/H(+) antiporter NhaA 1 (472 aa).

Transmembrane regions (helical) follow at residues 34-54, 86-106, 116-136, 146-166, 175-195, 203-223, 227-247, 324-344, 353-373, 394-414, and 428-448; these read TASITLLLAAIAAMVIANSQW, GLMVLFFFLLGLEIKYECLVG, LVIAMAIGGMLLPAGIYAGVA, GWGIPMATDTAFALGILALLG, VTLSALAIVDDMGAVAVIGLF, TSLMYAGLTLGGLFALNVLGF, IFYLVGGILLWWFVLQSGVHA, PVSLIILPIFAFINAGVALPD, VVFIGVASAMVLGKVIGISVF, VFALACLAGVGFTMSLFIASL, and LGILAGSVIAAIIGTTLFLMI.

It belongs to the NhaA Na(+)/H(+) (TC 2.A.33) antiporter family.

Its subcellular location is the cell inner membrane. It catalyses the reaction Na(+)(in) + 2 H(+)(out) = Na(+)(out) + 2 H(+)(in). Na(+)/H(+) antiporter that extrudes sodium in exchange for external protons. This is Na(+)/H(+) antiporter NhaA 1 from Pseudoalteromonas atlantica (strain T6c / ATCC BAA-1087).